The primary structure comprises 73 residues: Translation initiation factor IF-1 (73 aa).

The S1-like domain maps to 1–73 (MPKKDGVIEI…SRGRIVYRYK (73 aa)).

This sequence belongs to the IF-1 family. In terms of assembly, component of the 30S ribosomal translation pre-initiation complex which assembles on the 30S ribosome in the order IF-2 and IF-3, IF-1 and N-formylmethionyl-tRNA(fMet); mRNA recruitment can occur at any time during PIC assembly.

The protein resides in the cytoplasm. Functionally, one of the essential components for the initiation of protein synthesis. Stabilizes the binding of IF-2 and IF-3 on the 30S subunit to which N-formylmethionyl-tRNA(fMet) subsequently binds. Helps modulate mRNA selection, yielding the 30S pre-initiation complex (PIC). Upon addition of the 50S ribosomal subunit IF-1, IF-2 and IF-3 are released leaving the mature 70S translation initiation complex. The chain is Translation initiation factor IF-1 from Kineococcus radiotolerans (strain ATCC BAA-149 / DSM 14245 / SRS30216).